Consider the following 318-residue polypeptide: 2-keto-3-deoxygluconate permease (318 aa).

10 helical membrane passes run 10–30 (IPGG…TFTP), 42–62 (GLIT…GASI), 76–96 (VLVV…GTFL), 105–125 (MLAG…NGGL), 139–159 (AGAF…VILG), 163–183 (IATF…IGFA), 199–219 (VQTL…LSVI), 224–244 (FAGI…LILA), 263–283 (AGAA…FAPV), and 289–309 (ALVA…TALW).

The protein belongs to the KdgT transporter family.

The protein resides in the cell inner membrane. The catalysed reaction is 2-dehydro-3-deoxy-D-gluconate(in) + H(+)(in) = 2-dehydro-3-deoxy-D-gluconate(out) + H(+)(out). Catalyzes the proton-dependent uptake of 2-keto-3-deoxygluconate (KDG) into the cell. This chain is 2-keto-3-deoxygluconate permease, found in Pectobacterium carotovorum subsp. carotovorum (Erwinia carotovora subsp. carotovora).